A 204-amino-acid polypeptide reads, in one-letter code: Putative AgrB-like protein (204 aa).

4 helical membrane passes run 52–74 (YGIA…YLWL), 87–107 (LNCT…FQNI), 111–131 (NWIV…FAPA), and 156–176 (LILT…LIMV).

The protein belongs to the AgrB family.

It localises to the cell membrane. May be involved in the proteolytic processing of a quorum sensing system signal molecule precursor. This is Putative AgrB-like protein from Listeria monocytogenes serotype 4b (strain CLIP80459).